Reading from the N-terminus, the 158-residue chain is uncharacterized protein (158 aa).

It belongs to the SixA phosphatase family.

This is an uncharacterized protein from Mycobacterium tuberculosis (strain CDC 1551 / Oshkosh).